We begin with the raw amino-acid sequence, 479 residues long: Aspartyl/glutamyl-tRNA(Asn/Gln) amidotransferase subunit B (479 aa).

This sequence belongs to the GatB/GatE family. GatB subfamily. As to quaternary structure, heterotrimer of A, B and C subunits.

It carries out the reaction L-glutamyl-tRNA(Gln) + L-glutamine + ATP + H2O = L-glutaminyl-tRNA(Gln) + L-glutamate + ADP + phosphate + H(+). The enzyme catalyses L-aspartyl-tRNA(Asn) + L-glutamine + ATP + H2O = L-asparaginyl-tRNA(Asn) + L-glutamate + ADP + phosphate + 2 H(+). Functionally, allows the formation of correctly charged Asn-tRNA(Asn) or Gln-tRNA(Gln) through the transamidation of misacylated Asp-tRNA(Asn) or Glu-tRNA(Gln) in organisms which lack either or both of asparaginyl-tRNA or glutaminyl-tRNA synthetases. The reaction takes place in the presence of glutamine and ATP through an activated phospho-Asp-tRNA(Asn) or phospho-Glu-tRNA(Gln). This chain is Aspartyl/glutamyl-tRNA(Asn/Gln) amidotransferase subunit B, found in Myxococcus xanthus (strain DK1622).